A 102-amino-acid chain; its full sequence is MAKQKIRIRLKAYEHRILDQSADKIVETAKRTGATISGPIPLPTERTLYTVIRSPHKYKDSREQFEMRTHKRLIDIVNPTPKTVDSLMKLDLPSGVDIEIKL.

Belongs to the universal ribosomal protein uS10 family. In terms of assembly, part of the 30S ribosomal subunit.

Functionally, involved in the binding of tRNA to the ribosomes. This is Small ribosomal subunit protein uS10 from Ligilactobacillus salivarius (strain UCC118) (Lactobacillus salivarius).